A 424-amino-acid polypeptide reads, in one-letter code: UPF0597 protein Shew185_3080 (424 aa).

This sequence belongs to the UPF0597 family.

The sequence is that of UPF0597 protein Shew185_3080 from Shewanella baltica (strain OS185).